Here is a 267-residue protein sequence, read N- to C-terminus: Energy-coupling factor transporter transmembrane protein EcfT (267 aa).

5 helical membrane-spanning segments follow: residues 30 to 50 (FWYVVIIFFAKGPLTYLLLVA), 67 to 87 (WAGLKPLLWVIGLTIAIQVLF), 110 to 130 (ALVILARFILIVLASTVLTAT), 152 to 172 (VPVNQIAMMISIALRFIPTIM), and 247 to 267 (SIALAVVVIVSVLFFVARILL).

This sequence belongs to the energy-coupling factor EcfT family. Forms a stable energy-coupling factor (ECF) transporter complex composed of 2 membrane-embedded substrate-binding proteins (S component), 2 ATP-binding proteins (A component) and 2 transmembrane proteins (T component). May be able to interact with more than 1 S component at a time.

It localises to the cell membrane. Transmembrane (T) component of an energy-coupling factor (ECF) ABC-transporter complex. Unlike classic ABC transporters this ECF transporter provides the energy necessary to transport a number of different substrates. The polypeptide is Energy-coupling factor transporter transmembrane protein EcfT (Limosilactobacillus fermentum (strain CECT 5716 / Lc40) (Lactobacillus fermentum)).